The primary structure comprises 193 residues: Protein THEM6 (193 aa).

The signal sequence occupies residues 1–18; it reads MSWLVVLLILYVIWDVNY. N149 carries an N-linked (GlcNAc...) asparagine glycan.

The protein belongs to the THEM6 family.

The protein localises to the secreted. This is Protein THEM6 from Drosophila melanogaster (Fruit fly).